Consider the following 381-residue polypeptide: Penicillin-binding protein 4 (381 aa).

Residue serine 60 is the Acyl-ester intermediate of the active site. A helical membrane pass occupies residues 271–291 (VAGCLDTWSFMATGWGHGWAL). 299–308 (GYGHDGASGG) lines the NAD(+) pocket. A helical membrane pass occupies residues 315-340 (VVPGSGVVAALLTNGGVATSFFTDLF).

This sequence belongs to the beta-lactamase family.

It is found in the cell membrane. Involved in cell wall biosynthesis and may also act as a sensor of external penicillins. The sequence is that of Penicillin-binding protein 4 (pbp) from Amycolatopsis lactamdurans (Nocardia lactamdurans).